Reading from the N-terminus, the 160-residue chain is Transcription antitermination protein NusB (160 aa).

Belongs to the NusB family.

Its function is as follows. Involved in transcription antitermination. Required for transcription of ribosomal RNA (rRNA) genes. Binds specifically to the boxA antiterminator sequence of the ribosomal RNA (rrn) operons. This Sinorhizobium fredii (strain NBRC 101917 / NGR234) protein is Transcription antitermination protein NusB.